A 432-amino-acid polypeptide reads, in one-letter code: C2H2 type master regulator of conidiophore development brlA (432 aa).

2 disordered regions span residues 22–72 and 238–260; these read SNEC…RTPG and KQHS…ADTP. Residues 29–44 show a composition bias toward low complexity; sequence TSSFSPLESPTPTPTS. 2 stretches are compositionally biased toward polar residues: residues 62-72 and 238-252; these read LPNNTYERTPG and KQHS…CSLG. C2H2-type zinc fingers lie at residues 320-344 and 350-375; these read FKCK…MKSH and HVCW…TKTH. A disordered region spans residues 388 to 432; sequence LDENSPDYDPEFRGQLTPDGRPIYGSKLDDPIPGAGDMSLDGWDE.

It is found in the nucleus. BrlA, abaA and wetA are pivotal regulators of conidiophore development and conidium maturation. They act individually and together to regulate their own expression and that of numerous other sporulation-specific genes. Binds promoters of target genes at brlA response elements (BREs) containing the conserved sequence 5'-(C/A)(A/G)AGGG(G/A)-3'. Controls the expression of the conidiophore-specific phenol oxidase ivoB. Controls the expression of the hydrophobin rodA. Mediates the developmental switch from the indeterminate, apical growth pattern of vegetative cells to the budding growth pattern of conidiophores. Expression of brlA leads to activation of abaA, wetA and stuA, cessation of vegetative growth, cellular vacuolization and spore formation. In Emericella nidulans (strain FGSC A4 / ATCC 38163 / CBS 112.46 / NRRL 194 / M139) (Aspergillus nidulans), this protein is C2H2 type master regulator of conidiophore development brlA.